The primary structure comprises 465 residues: Crh-like protein ARB_05253 (465 aa).

A signal peptide spans 1-21 (MKLSLAAALLGALAVSAQTST). The GH16 domain occupies 22 to 223 (ECNPLKQKCP…WAGGETDFSK (202 aa)). A disulfide bond links cysteine 23 and cysteine 30. The active-site Nucleophile is glutamate 114. The Proton donor role is filled by glutamate 118. Residues glutamate 118, tryptophan 200, and threonine 211 each coordinate chitin. 2 disordered regions span residues 261 to 325 (GQVN…STMT) and 339 to 442 (TGTG…PGST). The N-linked (GlcNAc...) asparagine glycan is linked to asparagine 264. Over residues 277 to 287 (SSTLPSSPSTS) the composition is skewed to low complexity. Residues 304 to 325 (QAPNTGSSPSNTLTNGPSSTMT) show a composition bias toward polar residues. Composition is skewed to low complexity over residues 339–348 (TGTGGVVTPT), 361–376 (TSRS…SASS), and 383–397 (MTTS…TGTG). Serine 441 carries GPI-anchor amidated serine lipidation. Positions 442-465 (TGAIHSVSNALLLSFCAIAAWALV) are cleaved as a propeptide — removed in mature form.

This sequence belongs to the glycosyl hydrolase 16 family. CRH1 subfamily. The GPI-anchor is attached to the protein in the endoplasmic reticulum and serves to target the protein to the cell surface. There, the glucosamine-inositol phospholipid moiety is cleaved off and the GPI-modified mannoprotein is covalently attached via its lipidless GPI glycan remnant to the 1,6-beta-glucan of the outer cell wall layer.

The protein localises to the secreted. It localises to the cell wall. The protein resides in the membrane. The catalysed reaction is Random endo-hydrolysis of N-acetyl-beta-D-glucosaminide (1-&gt;4)-beta-linkages in chitin and chitodextrins.. Dual chitinase/transglycosylase that plays a role in cell wall architecture. Chitinase and transglycosylase activities are coupled. Required for the polysaccharide cross-linking at the septa and the cell wall. More specifically, transfers chitin to 1,6-beta-glucan in the cell wall. This chain is Crh-like protein ARB_05253, found in Arthroderma benhamiae (strain ATCC MYA-4681 / CBS 112371) (Trichophyton mentagrophytes).